Reading from the N-terminus, the 355-residue chain is Phospho-N-acetylmuramoyl-pentapeptide-transferase (355 aa).

10 helical membrane passes run 3 to 23 (GVLIAAMVALVVSLLGTPWVI), 56 to 76 (VIIVATLVGYFLAHLVTGIGF), 80 to 100 (GLLVLLVMTGLGIVGFLDDYI), 120 to 140 (AAVALAFGLLAVRFKNHAGLL), 152 to 172 (TSLTVGIIGFPLLAWIIIAAT), 185 to 205 (LAAGTSAMVFGAYVVISFWQF), 224 to 244 (PLDVALVAAAAMGACFGFLWW), 251 to 271 (IFMGDTGSLALGGAFASIAIV), 276 to 296 (LLLVVLGGLFVIETLSVMIQV), and 330 to 350 (FWIVSGLAVAFGLGLFYAEFL).

This sequence belongs to the glycosyltransferase 4 family. MraY subfamily. The cofactor is Mg(2+).

It localises to the cell membrane. It carries out the reaction UDP-N-acetyl-alpha-D-muramoyl-L-alanyl-gamma-D-glutamyl-meso-2,6-diaminopimeloyl-D-alanyl-D-alanine + di-trans,octa-cis-undecaprenyl phosphate = di-trans,octa-cis-undecaprenyl diphospho-N-acetyl-alpha-D-muramoyl-L-alanyl-D-glutamyl-meso-2,6-diaminopimeloyl-D-alanyl-D-alanine + UMP. The protein operates within cell wall biogenesis; peptidoglycan biosynthesis. Its function is as follows. Catalyzes the initial step of the lipid cycle reactions in the biosynthesis of the cell wall peptidoglycan: transfers peptidoglycan precursor phospho-MurNAc-pentapeptide from UDP-MurNAc-pentapeptide onto the lipid carrier undecaprenyl phosphate, yielding undecaprenyl-pyrophosphoryl-MurNAc-pentapeptide, known as lipid I. The sequence is that of Phospho-N-acetylmuramoyl-pentapeptide-transferase from Frankia alni (strain DSM 45986 / CECT 9034 / ACN14a).